The following is a 203-amino-acid chain: Urease accessory protein UreG (203 aa).

14 to 21 serves as a coordination point for GTP; sequence GPVGSGKT.

The protein belongs to the SIMIBI class G3E GTPase family. UreG subfamily. As to quaternary structure, homodimer. UreD, UreF and UreG form a complex that acts as a GTP-hydrolysis-dependent molecular chaperone, activating the urease apoprotein by helping to assemble the nickel containing metallocenter of UreC. The UreE protein probably delivers the nickel.

Its subcellular location is the cytoplasm. Functionally, facilitates the functional incorporation of the urease nickel metallocenter. This process requires GTP hydrolysis, probably effectuated by UreG. This chain is Urease accessory protein UreG, found in Agrobacterium fabrum (strain C58 / ATCC 33970) (Agrobacterium tumefaciens (strain C58)).